The sequence spans 91 residues: C-C motif chemokine 5 (91 aa).

The signal sequence occupies residues 1–23; it reads MKVFAAALAVILATATFCTPASA. Disulfide bonds link Cys-33–Cys-57 and Cys-34–Cys-73.

Belongs to the intercrine beta (chemokine CC) family.

The protein resides in the secreted. Chemoattractant for blood monocytes, memory T-helper cells and eosinophils. Causes the release of histamine from basophils and activates eosinophils. May activate several chemokine receptors including CCR1, CCR3, CCR4 and CCR5. May also be an agonist of the G protein-coupled receptor GPR75. Together with GPR75, may play a role in neuron survival through activation of a downstream signaling pathway involving the PI3, Akt and MAP kinases. By activating GPR75 may also play a role in insulin secretion by islet cells. The sequence is that of C-C motif chemokine 5 (CCL5) from Equus caballus (Horse).